The chain runs to 372 residues: N-methyl-L-tryptophan oxidase (372 aa).

4–34 (DLIIIGSGSVGAAAGYYATRAGLKVLMTDAH) serves as a coordination point for FAD. Cys-307 carries the S-8alpha-FAD cysteine modification.

It belongs to the MSOX/MTOX family. MTOX subfamily. As to quaternary structure, monomer. The cofactor is FAD.

The enzyme catalyses N(alpha)-methyl-L-tryptophan + O2 + H2O = L-tryptophan + formaldehyde + H2O2. In terms of biological role, catalyzes the oxidative demethylation of N-methyl-L-tryptophan. This Salmonella typhimurium (strain LT2 / SGSC1412 / ATCC 700720) protein is N-methyl-L-tryptophan oxidase.